Consider the following 324-residue polypeptide: tRNA uridine(34) hydroxylase (324 aa).

The region spanning 145 to 239 (NDKKTIFIDM…YVHDARKNGL (95 aa)) is the Rhodanese domain. C199 serves as the catalytic Cysteine persulfide intermediate.

It belongs to the TrhO family.

The catalysed reaction is uridine(34) in tRNA + AH2 + O2 = 5-hydroxyuridine(34) in tRNA + A + H2O. Catalyzes oxygen-dependent 5-hydroxyuridine (ho5U) modification at position 34 in tRNAs. This is tRNA uridine(34) hydroxylase from Buchnera aphidicola subsp. Acyrthosiphon pisum (strain Tuc7).